A 385-amino-acid polypeptide reads, in one-letter code: MKDSFLFTSESVTEGHPDKMADQISDAVLDYIIERDKKAKVACETLVSNGFCMITGELKTSVYAPMQEIAREVVKKIGYTDALYGFDYRSAAVLNGIGEQSPDINQGVDREDGEIGAGDQGLMFGYACKETETLMPLPIHLAHQLAFALAQKRKDNTLPFLRPDGKSQVSVRYENNKPVSVDTIVISTQHSPEVSQKHLKEAVIEEIVYKVLPKEYLHDNIKFFINPTGKFVIGGPQGDAGLTGRKIIVDTYGGFCPHGGGAFSGKDPSKVDRSAAYAARYVAKNLVASGVCDKATVQLAYAIGVIEPVSIYVNTHNTSKHSSAELEKCVKSVFKLTPKGIIESLDLLRPIYSLTSAYGHFGRELEEFTWEKTNKVEEIKAFFKR.

His-16 lines the ATP pocket. Asp-18 provides a ligand contact to Mg(2+). Glu-44 contacts K(+). L-methionine contacts are provided by Glu-57 and Gln-100. A flexible loop region spans residues Gln-100–Arg-110. ATP contacts are provided by residues Asp-164–Lys-166, Lys-230–Phe-231, Asp-239, Arg-245–Lys-246, Ala-262, and Lys-266. Residue Asp-239 participates in L-methionine binding. L-methionine is bound at residue Lys-270.

Belongs to the AdoMet synthase family. Homotetramer; dimer of dimers. The cofactor is Mg(2+). K(+) serves as cofactor.

It is found in the cytoplasm. It catalyses the reaction L-methionine + ATP + H2O = S-adenosyl-L-methionine + phosphate + diphosphate. It functions in the pathway amino-acid biosynthesis; S-adenosyl-L-methionine biosynthesis; S-adenosyl-L-methionine from L-methionine: step 1/1. Its function is as follows. Catalyzes the formation of S-adenosylmethionine (AdoMet) from methionine and ATP. The overall synthetic reaction is composed of two sequential steps, AdoMet formation and the subsequent tripolyphosphate hydrolysis which occurs prior to release of AdoMet from the enzyme. This chain is S-adenosylmethionine synthase, found in Helicobacter pylori (strain J99 / ATCC 700824) (Campylobacter pylori J99).